An 839-amino-acid polypeptide reads, in one-letter code: MSHMDSHPGRGLADGWLWGIQPRLLLPTVPVSGSRLVWLLLLASLLPSAWPASPLPREEEIVFPEKLNGSVLPGLGAPARLLYRLPAFGETLLLELEKDPGVQVEGLTVQYLGRAPELLGGAEPGTYLTGTINGDPESVASLHWDGGALLGVLQYRGTELHIQPLEGGAPNSAGGPGAHILRRKSPVSGQGPMCNVKAPPGKPSPSPRRAKRFASLSRFVETLVVADDKMAAFHGAGLKRYLLTVMAAAAKAFKHPSIRNPVSLVVTRLVVLGPGEEGPQVGPSAAQTLRSFCAWQRGLNTPDDADPGHFDTAILFTRQDLCGVSTCDTLGMADVGTVCDPARSCAIVEDDGLQSAFTAAHELGHVFSMLHDNSKQCTGLNGPESTSRHVMAPVMAHVDPEEPWSPCSARFITDFLDNGFGHCLLDKPEAPLHLPVTFPGKDYDADRQCQLTFGPDSRHCPQLPPPCAALWCSGHLNGHAMCQTKHSPWADGTPCGPAQACMGGRCLHVDQLQAFNVPQAGGWGPWGSWGDCSRSCGGGVQFSSRDCTRPVPRNGGKYCEGRRTRFRSCNTQDCPTGSALTFREEQCAAYNHRTDLFKNFPGPMDWVPRYTGVAPRDQCKLTCQTRALGYYYVLDPRVADGTPCSPDSSSVCVQGRCIHAGCDRVIGSKKKFDKCMVCGGDGSSCSKQSGSFKKFRYGYNNVVTIPAGATHILVRQQGSPSVRSLYLALKLPDGSYALNGEYTLIPSPTDVVLPGAVSLRYSGATAASETLSGHGPLAEPLTLQVLVAGNPQNARLRYSFFVPRPRPVPSTPRPTPQDWLRRKSQILEILRRRSWAGRK.

Residues 1 to 51 (MSHMDSHPGRGLADGWLWGIQPRLLLPTVPVSGSRLVWLLLLASLLPSAWP) form the signal peptide. A propeptide spanning residues 52-212 (ASPLPREEEI…PSPSPRRAKR (161 aa)) is cleaved from the precursor. The N-linked (GlcNAc...) asparagine glycan is linked to asparagine 68. The segment at 166 to 209 (EGGAPNSAGGPGAHILRRKSPVSGQGPMCNVKAPPGKPSPSPRR) is disordered. Residues 192 to 199 (PMCNVKAP) carry the Cysteine switch motif. A Zn(2+)-binding site is contributed by cysteine 194. The region spanning 218-428 (RFVETLVVAD…GFGHCLLDKP (211 aa)) is the Peptidase M12B domain. 11 disulfides stabilise this stretch: cysteine 293-cysteine 345, cysteine 322-cysteine 327, cysteine 339-cysteine 423, cysteine 377-cysteine 407, cysteine 449-cysteine 472, cysteine 460-cysteine 482, cysteine 467-cysteine 501, cysteine 495-cysteine 506, cysteine 532-cysteine 569, cysteine 536-cysteine 574, and cysteine 547-cysteine 559. Histidine 361 provides a ligand contact to Zn(2+). Residue glutamate 362 is part of the active site. The Zn(2+) site is built by histidine 365 and histidine 371. One can recognise a Disintegrin domain in the interval 437 to 519 (TFPGKDYDAD…DQLQAFNVPQ (83 aa)). Residues 520–575 (AGGWGPWGSWGDCSRSCGGGVQFSSRDCTRPVPRNGGKYCEGRRTRFRSCNTQDCP) form the TSP type-1 domain. A spacer region spans residues 686–839 (SKQSGSFKKF…LRRRSWAGRK (154 aa)).

Interacts with SRPX2. It depends on Zn(2+) as a cofactor. Post-translationally, the precursor is cleaved by a furin endopeptidase. Glycosylated. Can be O-fucosylated by POFUT2 on a serine or a threonine residue found within the consensus sequence C1-X(2)-(S/T)-C2-G of the TSP type-1 repeat domains where C1 and C2 are the first and second cysteine residue of the repeat, respectively. Fucosylated repeats can then be further glycosylated by the addition of a beta-1,3-glucose residue by the glucosyltransferase, B3GALTL. Fucosylation mediates the efficient secretion of ADAMTS family members. Can also be C-glycosylated with one or two mannose molecules on tryptophan residues within the consensus sequence W-X-X-W of the TPRs, and N-glycosylated. These other glycosylations can also facilitate secretion.

Its subcellular location is the secreted. It localises to the extracellular space. The protein resides in the extracellular matrix. It catalyses the reaction Glutamyl endopeptidase. Bonds cleaved include 370-Thr-Glu-Gly-Glu-|-Ala-Arg-Gly-Ser-377 in the interglobular domain of mammalian aggrecan.. Cleaves aggrecan, a cartilage proteoglycan, at the '392-Glu-|-Ala-393' site and may be involved in its turnover. Also cleaves COMP. May play an important role in the destruction of aggrecan in arthritic diseases. The polypeptide is A disintegrin and metalloproteinase with thrombospondin motifs 4 (ADAMTS4) (Bos taurus (Bovine)).